Consider the following 79-residue polypeptide: Sigma-O factor regulatory protein RsoA (79 aa).

Functionally, together with RNA polymerase sigma factor SigO, positively regulates the expression of at least three operons, including oxdC-yvrL, sigO-rsoA and yvrJ. Required for the acid stress-dependent induction of the oxalate decarboxylase oxdC. This is Sigma-O factor regulatory protein RsoA (rsoA) from Bacillus subtilis (strain 168).